We begin with the raw amino-acid sequence, 156 residues long: Peptide methionine sulfoxide reductase MsrA (156 aa).

The active site involves Cys-10.

Belongs to the MsrA Met sulfoxide reductase family.

The catalysed reaction is L-methionyl-[protein] + [thioredoxin]-disulfide + H2O = L-methionyl-(S)-S-oxide-[protein] + [thioredoxin]-dithiol. It catalyses the reaction [thioredoxin]-disulfide + L-methionine + H2O = L-methionine (S)-S-oxide + [thioredoxin]-dithiol. In terms of biological role, has an important function as a repair enzyme for proteins that have been inactivated by oxidation. Catalyzes the reversible oxidation-reduction of methionine sulfoxide in proteins to methionine. The polypeptide is Peptide methionine sulfoxide reductase MsrA (Metamycoplasma arthritidis (strain 158L3-1) (Mycoplasma arthritidis)).